Here is a 287-residue protein sequence, read N- to C-terminus: 3-hydroxyanthranilate 3,4-dioxygenase (287 aa).

The domain A (catalytic) stretch occupies residues 1–163; that stretch reads MTNQSLHVNI…SKENETGKPD (163 aa). Position 46 (arginine 46) interacts with O2. Fe cation-binding residues include histidine 50, glutamate 56, and histidine 94. Glutamate 56 serves as a coordination point for substrate. The substrate site is built by arginine 98 and glutamate 108. The interval 164–180 is linker; it reads PANPIKPAPYPLNTMNV. The domain B stretch occupies residues 181–287; sequence MTPFSFREWV…AQDPDRKRPY (107 aa).

It belongs to the 3-HAO family. In terms of assembly, monomer. The cofactor is Fe(2+).

It is found in the cytoplasm. It localises to the cytosol. It catalyses the reaction 3-hydroxyanthranilate + O2 = (2Z,4Z)-2-amino-3-carboxymuconate 6-semialdehyde. Its pathway is cofactor biosynthesis; NAD(+) biosynthesis; quinolinate from L-kynurenine: step 3/3. In terms of biological role, catalyzes the oxidative ring opening of 3-hydroxyanthranilate to 2-amino-3-carboxymuconate semialdehyde, which spontaneously cyclizes to quinolinate. The polypeptide is 3-hydroxyanthranilate 3,4-dioxygenase (haao) (Danio rerio (Zebrafish)).